The following is a 100-amino-acid chain: Large ribosomal subunit protein bL21 (100 aa).

The protein belongs to the bacterial ribosomal protein bL21 family. Part of the 50S ribosomal subunit. Contacts protein L20.

This protein binds to 23S rRNA in the presence of protein L20. In Wolbachia pipientis wMel, this protein is Large ribosomal subunit protein bL21.